The sequence spans 543 residues: CTP synthase (543 aa).

The interval 1-265 (MARYIFITGG…DEEVLAAFGI (265 aa)) is amidoligase domain. Residue serine 13 participates in CTP binding. Serine 13 is a binding site for UTP. Position 14-19 (14-19 (SLGKGL)) interacts with ATP. Tyrosine 54 lines the L-glutamine pocket. Residue aspartate 71 participates in ATP binding. The Mg(2+) site is built by aspartate 71 and glutamate 139. CTP is bound by residues 146–148 (DIE), 186–191 (KTKPTQ), and lysine 222. UTP is bound by residues 186–191 (KTKPTQ) and lysine 222. 238–240 (RDA) provides a ligand contact to ATP. The Glutamine amidotransferase type-1 domain occupies 291–542 (TIAIVGKYTG…IEAAMAQSRL (252 aa)). Glycine 353 serves as a coordination point for L-glutamine. Cysteine 380 acts as the Nucleophile; for glutamine hydrolysis in catalysis. Residues 381–384 (FGMQ), glutamate 404, and arginine 470 contribute to the L-glutamine site. Residues histidine 515 and glutamate 517 contribute to the active site.

Belongs to the CTP synthase family. As to quaternary structure, homotetramer.

The enzyme catalyses UTP + L-glutamine + ATP + H2O = CTP + L-glutamate + ADP + phosphate + 2 H(+). It catalyses the reaction L-glutamine + H2O = L-glutamate + NH4(+). It carries out the reaction UTP + NH4(+) + ATP = CTP + ADP + phosphate + 2 H(+). The protein operates within pyrimidine metabolism; CTP biosynthesis via de novo pathway; CTP from UDP: step 2/2. Allosterically activated by GTP, when glutamine is the substrate; GTP has no effect on the reaction when ammonia is the substrate. The allosteric effector GTP functions by stabilizing the protein conformation that binds the tetrahedral intermediate(s) formed during glutamine hydrolysis. Inhibited by the product CTP, via allosteric rather than competitive inhibition. Functionally, catalyzes the ATP-dependent amination of UTP to CTP with either L-glutamine or ammonia as the source of nitrogen. Regulates intracellular CTP levels through interactions with the four ribonucleotide triphosphates. This is CTP synthase from Rhodopseudomonas palustris (strain BisA53).